A 158-amino-acid chain; its full sequence is Endoribonuclease YbeY (158 aa).

Positions 118, 122, and 128 each coordinate Zn(2+).

It belongs to the endoribonuclease YbeY family. Requires Zn(2+) as cofactor.

It localises to the cytoplasm. Functionally, single strand-specific metallo-endoribonuclease involved in late-stage 70S ribosome quality control and in maturation of the 3' terminus of the 16S rRNA. The polypeptide is Endoribonuclease YbeY (Bartonella bacilliformis (strain ATCC 35685 / KC583 / Herrer 020/F12,63)).